Consider the following 198-residue polypeptide: MSRFTGSTWKVSRRLGYSISETGKELKKRPYAPGQHGQRRSKLSNYGIQLQEKQKVRFVYGVSEKQFKKTFLESAKMQGKQGENFLKLLESRLDNVVYRLGFTKTRAQARQLVNHGHILVDGKKVDIPSYRLAPGQTVQLKEKSKNLTIVKEALEAQFAHVDYVALDANGVGTFSRLPERNEFLFDINEQLIVEFYNR.

The segment at 26–45 (LKKRPYAPGQHGQRRSKLSN) is disordered. The S4 RNA-binding domain occupies 91-154 (SRLDNVVYRL…KNLTIVKEAL (64 aa)).

It belongs to the universal ribosomal protein uS4 family. Part of the 30S ribosomal subunit. Contacts protein S5. The interaction surface between S4 and S5 is involved in control of translational fidelity.

In terms of biological role, one of the primary rRNA binding proteins, it binds directly to 16S rRNA where it nucleates assembly of the body of the 30S subunit. Its function is as follows. With S5 and S12 plays an important role in translational accuracy. This Acholeplasma laidlawii (strain PG-8A) protein is Small ribosomal subunit protein uS4.